The sequence spans 248 residues: tRNA (guanine-N(1)-)-methyltransferase (248 aa).

S-adenosyl-L-methionine is bound by residues glycine 113 and 133–138 (IGDFVL).

It belongs to the RNA methyltransferase TrmD family. As to quaternary structure, homodimer.

It is found in the cytoplasm. It carries out the reaction guanosine(37) in tRNA + S-adenosyl-L-methionine = N(1)-methylguanosine(37) in tRNA + S-adenosyl-L-homocysteine + H(+). In terms of biological role, specifically methylates guanosine-37 in various tRNAs. The polypeptide is tRNA (guanine-N(1)-)-methyltransferase (Dehalococcoides mccartyi (strain CBDB1)).